We begin with the raw amino-acid sequence, 73 residues long: Conotoxin MaI51 (73 aa).

The first 19 residues, 1–19, serve as a signal peptide directing secretion; sequence MQKLTILLLVAAVLLSTQA. A propeptide spanning residues 20–41 is cleaved from the precursor; that stretch reads LNQEKRPKEMINVLSKGKTNAE. A Pyrrolidone carboxylic acid modification is found at glutamine 46. Disulfide bonds link cysteine 47-cysteine 61, cysteine 54-cysteine 65, and cysteine 60-cysteine 69. Isoleucine amide is present on isoleucine 72.

The protein belongs to the conotoxin O2 superfamily. As to expression, expressed by the venom duct.

The protein localises to the secreted. The sequence is that of Conotoxin MaI51 from Conus marmoreus (Marble cone).